Consider the following 152-residue polypeptide: Methylglyoxal synthase (152 aa).

In terms of domain architecture, MGS-like spans 1 to 152 (MELTTRTIAA…YDRYLQQRLK (152 aa)). Substrate contacts are provided by residues His19, Lys23, 45-48 (TGTT), and 65-66 (SG). The active-site Proton donor/acceptor is the Asp71. His98 is a binding site for substrate.

This sequence belongs to the methylglyoxal synthase family.

The enzyme catalyses dihydroxyacetone phosphate = methylglyoxal + phosphate. Its function is as follows. Catalyzes the formation of methylglyoxal from dihydroxyacetone phosphate. In Yersinia enterocolitica serotype O:8 / biotype 1B (strain NCTC 13174 / 8081), this protein is Methylglyoxal synthase.